The primary structure comprises 149 residues: Deoxyuridine 5'-triphosphate nucleotidohydrolase (149 aa).

Residues 68-70 (RSG), asparagine 81, and 85-87 (LID) each bind substrate.

It belongs to the dUTPase family. The cofactor is Mg(2+).

The catalysed reaction is dUTP + H2O = dUMP + diphosphate + H(+). It functions in the pathway pyrimidine metabolism; dUMP biosynthesis; dUMP from dCTP (dUTP route): step 2/2. This enzyme is involved in nucleotide metabolism: it produces dUMP, the immediate precursor of thymidine nucleotides and it decreases the intracellular concentration of dUTP so that uracil cannot be incorporated into DNA. In Nitrosomonas eutropha (strain DSM 101675 / C91 / Nm57), this protein is Deoxyuridine 5'-triphosphate nucleotidohydrolase.